We begin with the raw amino-acid sequence, 479 residues long: PRAME family member 19 (479 aa).

An LRR 1 repeat occupies 15-38 (QSLLRDQALAISVLDELPRELFPR). The LRR 1; degenerate repeat unit spans residues 97–124 (RWKLQVLEMRDVDENFWTIWSGARPLSC). One copy of the LRR 2; degenerate repeat lies at 179–203 (HLCCTKVVNYSMNILNFRNILETVY). The LRR 3; degenerate repeat unit spans residues 204 to 230 (PDSIQVLEIWNMCWPCMVAEVSRYLSQ). One copy of the LRR 4; degenerate repeat lies at 231–265 (MKNLRKLFISDGCGYLPSFESQGQLVAEFSSVFLR). LRR repeat units follow at residues 266-291 (LEYL…IRCL), 292-323 (KSPL…SQLK), 324-342 (QLNL…PLRA), 348-375 (AATL…ALSR), and 376-400 (CSNL…LLRH).

Belongs to the PRAME family.

This chain is PRAME family member 19, found in Homo sapiens (Human).